We begin with the raw amino-acid sequence, 368 residues long: Histidinol-phosphate aminotransferase 1 (368 aa).

K224 carries the post-translational modification N6-(pyridoxal phosphate)lysine.

It belongs to the class-II pyridoxal-phosphate-dependent aminotransferase family. Histidinol-phosphate aminotransferase subfamily. In terms of assembly, homodimer. Pyridoxal 5'-phosphate is required as a cofactor.

It carries out the reaction L-histidinol phosphate + 2-oxoglutarate = 3-(imidazol-4-yl)-2-oxopropyl phosphate + L-glutamate. It participates in amino-acid biosynthesis; L-histidine biosynthesis; L-histidine from 5-phospho-alpha-D-ribose 1-diphosphate: step 7/9. This chain is Histidinol-phosphate aminotransferase 1 (hisC1), found in Rhizobium meliloti (strain 1021) (Ensifer meliloti).